The following is a 454-amino-acid chain: Pyrrolysine--tRNA ligase (454 aa).

Residues Thr-102–Ile-138 form a disordered region. The span at Glu-123–Lys-133 shows a compositional bias: polar residues.

The protein belongs to the class-II aminoacyl-tRNA synthetase family.

The protein localises to the cytoplasm. The catalysed reaction is tRNA(Pyl) + L-pyrrolysine + ATP = L-pyrrolysyl-tRNA(Pyl) + AMP + diphosphate. Catalyzes the attachment of pyrrolysine to tRNA(Pyl). Pyrrolysine is a lysine derivative encoded by the termination codon UAG. The polypeptide is Pyrrolysine--tRNA ligase (Methanosarcina mazei (strain ATCC BAA-159 / DSM 3647 / Goe1 / Go1 / JCM 11833 / OCM 88) (Methanosarcina frisia)).